The following is a 444-amino-acid chain: Ribulose bisphosphate carboxylase large chain (444 aa).

An N6,N6,N6-trimethyllysine modification is found at Lys5. Substrate contacts are provided by Asn114 and Thr164. The Proton acceptor role is filled by Lys166. Lys168 contacts substrate. Mg(2+)-binding residues include Lys192, Asp194, and Glu195. At Lys192 the chain carries N6-carboxylysine. Catalysis depends on His285, which acts as the Proton acceptor. Arg286, His318, and Ser370 together coordinate substrate.

It belongs to the RuBisCO large chain family. Type I subfamily. As to quaternary structure, heterohexadecamer of 8 large chains and 8 small chains; disulfide-linked. The disulfide link is formed within the large subunit homodimers. It depends on Mg(2+) as a cofactor. Post-translationally, the disulfide bond which can form in the large chain dimeric partners within the hexadecamer appears to be associated with oxidative stress and protein turnover.

It is found in the plastid. The protein resides in the chloroplast. It catalyses the reaction 2 (2R)-3-phosphoglycerate + 2 H(+) = D-ribulose 1,5-bisphosphate + CO2 + H2O. The catalysed reaction is D-ribulose 1,5-bisphosphate + O2 = 2-phosphoglycolate + (2R)-3-phosphoglycerate + 2 H(+). In terms of biological role, ruBisCO catalyzes two reactions: the carboxylation of D-ribulose 1,5-bisphosphate, the primary event in carbon dioxide fixation, as well as the oxidative fragmentation of the pentose substrate in the photorespiration process. Both reactions occur simultaneously and in competition at the same active site. This chain is Ribulose bisphosphate carboxylase large chain, found in Ginkgo biloba (Ginkgo).